The chain runs to 1065 residues: Cellulose synthase A catalytic subunit 3 [UDP-forming] (1065 aa).

At 1 to 260 (MESEGETAGK…PSSRINPYRM (260 aa)) the chain is on the cytoplasmic side. A Phosphoserine modification is found at Ser-3. Zn(2+) contacts are provided by Cys-20, Cys-23, Cys-39, Cys-42, Cys-47, Cys-50, Cys-62, and Cys-65. Residues 20–66 (CQICSDNVGKTVDGDRFVACDICSFPVCRPCYEYERKDGNQSCPQCK) form an RING-type; degenerate zinc finger. Ser-151, Ser-211, and Ser-216 each carry phosphoserine. A helical membrane pass occupies residues 261–281 (VIMLRLVILCLFLHYRITNPV). The Extracellular portion of the chain corresponds to 282 to 283 (PN). The chain crosses the membrane as a helical span at residues 284-304 (AFALWLVSVICEIWFALSWIL). The Cytoplasmic segment spans residues 305 to 842 (DQFPKWFPVN…LERFAYVNTT (538 aa)). UDP-alpha-D-glucose contacts are provided by Ser-343, Lys-349, Glu-350, and Asp-379. The active site involves Asp-379. Residues 433–457 (VKDRRAMKREYEEFKIRINALVSKA) adopt a coiled-coil conformation. Lys-520 provides a ligand contact to UDP-alpha-D-glucose. The Mn(2+) site is built by Lys-521 and Asp-545. Residues 643–672 (SKLCGGSRKKNSKAKKESDKKKSGRHTDST) form a disordered region. Positions 656 to 670 (AKKESDKKKSGRHTD) are enriched in basic and acidic residues. The active site involves Asp-765. The chain crosses the membrane as a helical span at residues 843–863 (IYPITSIPLLMYCTLPAVCLF). Residues 864–874 (TNQFIIPQISN) lie on the Extracellular side of the membrane. Residues 875–895 (IASIWFLSLFLSIFATGILEM) form a helical membrane-spanning segment. The Cytoplasmic portion of the chain corresponds to 896 to 910 (RWSGVGIDEWWRNEQ). A helical membrane pass occupies residues 911–931 (FWVIGGVSAHLFAVFQGILKV). Topologically, residues 932 to 961 (LAGIDTNFTVTSKASDEDGDFAELYLFKWT) are extracellular. Asn-938 is a glycosylation site (N-linked (GlcNAc...) asparagine). Residues 962 to 982 (TLLIPPTTLLIVNLVGVVAGV) form a helical membrane-spanning segment. Topologically, residues 983-993 (SYAINSGYQSW) are cytoplasmic. A helical transmembrane segment spans residues 994–1014 (GPLFGKLFFAFWVIVHLYPFL). At 1015–1023 (KGLMGRQNR) the chain is on the extracellular side. A helical membrane pass occupies residues 1024–1044 (TPTIVVVWSVLLASIFSLLWV). Topologically, residues 1045–1065 (RIDPFTSRVTGPDILECGINC) are cytoplasmic.

The protein belongs to the glycosyltransferase 2 family. Plant cellulose synthase subfamily. In terms of assembly, homodimer. Interacts with CESA1 and CESA6. Interacts with STL1 and STL2, but not with GOT1. Binds to CSI1 and CSI3. Interacts with PAT24/TIP1. Requires Zn(2+) as cofactor. Mn(2+) serves as cofactor. Palmitoylated, in part by PAT24/TIP1. In terms of tissue distribution, expressed in young plants, flowers and roots, and to a lower extent in leaves and stems. Localized in all cells except meristematic cells. Accumulates particularly in root caps, root hairs, epidermal layer, midveins of leaves and anthers. Not present in old tissues.

Its subcellular location is the cell membrane. The protein localises to the golgi apparatus membrane. The enzyme catalyses [(1-&gt;4)-beta-D-glucosyl](n) + UDP-alpha-D-glucose = [(1-&gt;4)-beta-D-glucosyl](n+1) + UDP + H(+). Its pathway is glycan metabolism; plant cellulose biosynthesis. In terms of biological role, catalytic subunit of cellulose synthase terminal complexes ('rosettes'), required for beta-1,4-glucan microfibril crystallization, a major mechanism of the cell wall formation. Involved in the primary cell wall formation, especially in roots. This is Cellulose synthase A catalytic subunit 3 [UDP-forming] from Arabidopsis thaliana (Mouse-ear cress).